The following is a 582-amino-acid chain: SHC-transforming protein 2 (582 aa).

2 disordered regions span residues 1–24 (MTQG…APTT) and 47–70 (GPAA…AGPG). Positions 8-20 (RAPPAPPAPPEPE) are enriched in pro residues. The PID domain occupies 147–329 (LGPGVSYVVR…AGPEESAWGD (183 aa)). Residues 330–486 (EEDSLEHNYY…PTEEQLRQEP (157 aa)) are CH1. A phosphotyrosine mark is found at Tyr338, Tyr339, and Tyr414. A disordered region spans residues 460 to 481 (PLEDQWPSPPTRRAPVAPTEEQ). The SH2 domain occupies 487–578 (WYHGRMSRRA…ESELHLRGVV (92 aa)).

In terms of assembly, interacts with the Trk receptors in a phosphotyrosine-dependent manner and MEGF12. Once activated, binds to GRB2. In terms of processing, phosphorylated on tyrosines by the Trk receptors. In terms of tissue distribution, expressed in brain. Expressed at high level in the hypothalamus and at low level in the caudate nucleus.

Its function is as follows. Signaling adapter that couples activated growth factor receptors to signaling pathway in neurons. Involved in the signal transduction pathways of neurotrophin-activated Trk receptors in cortical neurons. The chain is SHC-transforming protein 2 (SHC2) from Homo sapiens (Human).